A 453-amino-acid polypeptide reads, in one-letter code: Bifunctional protein GlmU (453 aa).

Positions 1-225 (MNIVILAAGT…EWETLGVNSK (225 aa)) are pyrophosphorylase. Residues 6–9 (LAAG), Lys20, Gln71, 76–77 (GT), 98–100 (YGD), Gly135, Glu150, Asn165, and Asn223 contribute to the UDP-N-acetyl-alpha-D-glucosamine site. Mg(2+) is bound at residue Asp100. A Mg(2+)-binding site is contributed by Asn223. A linker region spans residues 226–246 (QQLAELERIHQHNVADALLVA). The interval 247–453 (GVTLADPARL…GYVRPTKKKS (207 aa)) is N-acetyltransferase. Positions 329 and 347 each coordinate UDP-N-acetyl-alpha-D-glucosamine. His359 serves as the catalytic Proton acceptor. UDP-N-acetyl-alpha-D-glucosamine-binding residues include Tyr362 and Asn373. Residues Ala376, 382–383 (NY), Ser401, and Ala419 each bind acetyl-CoA.

It in the N-terminal section; belongs to the N-acetylglucosamine-1-phosphate uridyltransferase family. This sequence in the C-terminal section; belongs to the transferase hexapeptide repeat family. In terms of assembly, homotrimer. Mg(2+) is required as a cofactor.

It localises to the cytoplasm. It carries out the reaction alpha-D-glucosamine 1-phosphate + acetyl-CoA = N-acetyl-alpha-D-glucosamine 1-phosphate + CoA + H(+). The enzyme catalyses N-acetyl-alpha-D-glucosamine 1-phosphate + UTP + H(+) = UDP-N-acetyl-alpha-D-glucosamine + diphosphate. It functions in the pathway nucleotide-sugar biosynthesis; UDP-N-acetyl-alpha-D-glucosamine biosynthesis; N-acetyl-alpha-D-glucosamine 1-phosphate from alpha-D-glucosamine 6-phosphate (route II): step 2/2. It participates in nucleotide-sugar biosynthesis; UDP-N-acetyl-alpha-D-glucosamine biosynthesis; UDP-N-acetyl-alpha-D-glucosamine from N-acetyl-alpha-D-glucosamine 1-phosphate: step 1/1. Its pathway is bacterial outer membrane biogenesis; LPS lipid A biosynthesis. Its function is as follows. Catalyzes the last two sequential reactions in the de novo biosynthetic pathway for UDP-N-acetylglucosamine (UDP-GlcNAc). The C-terminal domain catalyzes the transfer of acetyl group from acetyl coenzyme A to glucosamine-1-phosphate (GlcN-1-P) to produce N-acetylglucosamine-1-phosphate (GlcNAc-1-P), which is converted into UDP-GlcNAc by the transfer of uridine 5-monophosphate (from uridine 5-triphosphate), a reaction catalyzed by the N-terminal domain. This chain is Bifunctional protein GlmU, found in Paraburkholderia phytofirmans (strain DSM 17436 / LMG 22146 / PsJN) (Burkholderia phytofirmans).